Reading from the N-terminus, the 380-residue chain is Outer membrane protein 40 (380 aa).

The signal sequence occupies residues 1 to 21 (MKAKSLLLALAGLACTFSATA). Residue Q22 is modified to Pyrrolidone carboxylic acid. The 111-residue stretch at 270-380 (PTVTRVVVDN…NRIVVMTAAE (111 aa)) folds into the OmpA-like domain.

This sequence belongs to the outer membrane OOP (TC 1.B.6) superfamily. Disulfide-linked heterodimer with Omp41.

The protein localises to the cell outer membrane. May have porin activity and function in peptidoglycan binding. The chain is Outer membrane protein 40 from Porphyromonas gingivalis (strain ATCC BAA-308 / W83).